The primary structure comprises 264 residues: 3-methyl-2-oxobutanoate hydroxymethyltransferase (264 aa).

Residues Asp-43 and Asp-82 each contribute to the Mg(2+) site. Residues 43 to 44 (DS), Asp-82, and Lys-111 contribute to the 3-methyl-2-oxobutanoate site. Glu-113 lines the Mg(2+) pocket. Glu-180 serves as the catalytic Proton acceptor.

It belongs to the PanB family. As to quaternary structure, homodecamer; pentamer of dimers. Mg(2+) serves as cofactor.

The protein resides in the cytoplasm. The enzyme catalyses 3-methyl-2-oxobutanoate + (6R)-5,10-methylene-5,6,7,8-tetrahydrofolate + H2O = 2-dehydropantoate + (6S)-5,6,7,8-tetrahydrofolate. Its pathway is cofactor biosynthesis; (R)-pantothenate biosynthesis; (R)-pantoate from 3-methyl-2-oxobutanoate: step 1/2. Its function is as follows. Catalyzes the reversible reaction in which hydroxymethyl group from 5,10-methylenetetrahydrofolate is transferred onto alpha-ketoisovalerate to form ketopantoate. This Campylobacter fetus subsp. fetus (strain 82-40) protein is 3-methyl-2-oxobutanoate hydroxymethyltransferase.